The following is a 383-amino-acid chain: Lipid-A-disaccharide synthase (383 aa).

It belongs to the LpxB family.

It carries out the reaction 2-N,3-O-bis[(3R)-3-hydroxytetradecanoyl]-alpha-D-glucosaminyl 1-phosphate + UDP-2-N,3-O-bis[(3R)-3-hydroxytetradecanoyl]-alpha-D-glucosamine = lipid A disaccharide (E. coli) + UDP + H(+). It catalyses the reaction a lipid X + a UDP-2-N,3-O-bis[(3R)-3-hydroxyacyl]-alpha-D-glucosamine = a lipid A disaccharide + UDP + H(+). It participates in glycolipid biosynthesis; lipid IV(A) biosynthesis; lipid IV(A) from (3R)-3-hydroxytetradecanoyl-[acyl-carrier-protein] and UDP-N-acetyl-alpha-D-glucosamine: step 5/6. Its function is as follows. Condensation of UDP-2,3-diacylglucosamine and 2,3-diacylglucosamine-1-phosphate to form lipid A disaccharide, a precursor of lipid A, a phosphorylated glycolipid that anchors the lipopolysaccharide to the outer membrane of the cell. The sequence is that of Lipid-A-disaccharide synthase from Klebsiella pneumoniae subsp. pneumoniae (strain ATCC 700721 / MGH 78578).